The chain runs to 97 residues: UPF0235 protein DET1292 (97 aa).

Belongs to the UPF0235 family.

The polypeptide is UPF0235 protein DET1292 (Dehalococcoides mccartyi (strain ATCC BAA-2266 / KCTC 15142 / 195) (Dehalococcoides ethenogenes (strain 195))).